Here is a 93-residue protein sequence, read N- to C-terminus: YcgL domain-containing protein PSHAb0508 (93 aa).

Residues 1-85 (MLTAVYKSKK…PQENLLSQLR (85 aa)) enclose the YcgL domain.

The chain is YcgL domain-containing protein PSHAb0508 from Pseudoalteromonas translucida (strain TAC 125).